A 63-amino-acid chain; its full sequence is Large ribosomal subunit protein uL29 (63 aa).

This sequence belongs to the universal ribosomal protein uL29 family.

The polypeptide is Large ribosomal subunit protein uL29 (Shewanella pealeana (strain ATCC 700345 / ANG-SQ1)).